We begin with the raw amino-acid sequence, 486 residues long: Glutamyl-tRNA(Gln) amidotransferase subunit A (486 aa).

Residues K74 and S149 each act as charge relay system in the active site. S173 functions as the Acyl-ester intermediate in the catalytic mechanism.

This sequence belongs to the amidase family. GatA subfamily. As to quaternary structure, heterotrimer of A, B and C subunits.

It carries out the reaction L-glutamyl-tRNA(Gln) + L-glutamine + ATP + H2O = L-glutaminyl-tRNA(Gln) + L-glutamate + ADP + phosphate + H(+). Functionally, allows the formation of correctly charged Gln-tRNA(Gln) through the transamidation of misacylated Glu-tRNA(Gln) in organisms which lack glutaminyl-tRNA synthetase. The reaction takes place in the presence of glutamine and ATP through an activated gamma-phospho-Glu-tRNA(Gln). The polypeptide is Glutamyl-tRNA(Gln) amidotransferase subunit A (Prochlorococcus marinus (strain SARG / CCMP1375 / SS120)).